The primary structure comprises 241 residues: MPASSPGHMGGSVREPALSVALWLSWGAVLGAVTCAVALLIQQTELQSLRREVSRLQRSGGPSQKQGERPWQSLWEQSPDVLEAWKDGAKSRRRRAVLTQKHKKKHSVLHLVPVNITSKADSDVTEVMWQPVLRRGRGLEAQGDIVRVWDTGIYLLYSQVLFHDVTFTMGQVVSREGQGRRETLFRCIRSMPSDPDRAYNSCYSAGVFHLHQGDIITVKIPRANAKLSLSPHGTFLGFVKL.

The propeptide occupies 1-95 (MPASSPGHMG…KDGAKSRRRR (95 aa)). In terms of domain architecture, THD spans 107-241 (SVLHLVPVNI…HGTFLGFVKL (135 aa)). N115 carries an N-linked (GlcNAc...) asparagine glycan. An intrachain disulfide couples C187 to C202.

Belongs to the tumor necrosis factor family. As to quaternary structure, homotrimer. The soluble form derives from the membrane form by proteolytic processing.

The protein localises to the secreted. Cytokine that binds to TNFRSF13B/TACI and to TNFRSF17/BCMA. Plays a role in the regulation of tumor cell growth. May be involved in monocyte/macrophage-mediated immunological processes. The chain is Tumor necrosis factor ligand superfamily member 13 (Tnfsf13) from Mus musculus (Mouse).